The chain runs to 211 residues: MGSRDDEYDYLFKVVLIGDSGVGKSNLLSRFTRNEFNLESKSTIGVEFATRSISVEGKTVKAQIWDTAGQERYRAITSAYYRGAVGALLVYDIAKHVTYENVERWLKELRDHADQNIVIMLVGNKSDLRHLRAVPTDEAKIYAERNQLSFIETSALDSTNVEAAFTNILTEIYKSVSNKHVGTDRQGYGGGSGTIIPSPASDPPKKQCCIP.

A GTP-binding site is contributed by 18-26 (GDSGVGKSN). The Effector region motif lies at 40–48 (SKSTIGVEF). GTP-binding positions include 66 to 70 (DTAGQ), 124 to 127 (NKSD), and 154 to 156 (SAL). The interval 187 to 211 (GYGGGSGTIIPSPASDPPKKQCCIP) is disordered. S-geranylgeranyl cysteine attachment occurs at residues C208 and C209.

Belongs to the small GTPase superfamily. Rab family. Interacts with rei-1 and rei-2. The GDP-form preferentially binds to rei-1 and rei-2. As to expression, expressed weakly in sperm, but more predominantly in oocytes. Expressed in the intestine.

The protein resides in the cytoplasmic vesicle. It localises to the secretory vesicle. The protein localises to the endosome. Its subcellular location is the cytoplasm. It is found in the cytoskeleton. The protein resides in the spindle. It localises to the microtubule organizing center. The protein localises to the spindle pole body. Its subcellular location is the centrosome. It is found in the apical cell membrane. The protein resides in the cytosol. It localises to the recycling endosome membrane. The protein localises to the golgi apparatus membrane. Its subcellular location is the cytoplasmic granule. The small GTPases Rab are key regulators of intracellular membrane trafficking, from the formation of transport vesicles to their fusion with membranes. Rabs cycle between an inactive GDP-bound form and an active GTP-bound form that is able to recruit to membranes different set of downstream effectors directly responsible for vesicle formation, movement, tethering and fusion. Involved in regulating the meiotic maturation of oocytes. Plays a role in egg shell formation, regulating exocytosis of chondroitin proteoglycans following fertilization. Controls cortical granule localization and targets them to the plasma membrane for exocytosis. Acts as a major regulator of membrane delivery during cytokinesis. Regulates the cytoskeleton by facilitating astral microtubule elongation and organization during metaphase to ensure proper spindle alignment and polarity in the first embryonic cell division. Maintains normal endoplasmic reticulum morphology during metaphase. Involved in vesicle formation and plasma membrane repair following exposure to pore forming toxins. Regulates endocytic recycling. May play a role in yolk receptor endocytosis in growing oocytes. Plays a role in the shedding of pathogen spores from intestinal cells via its involvement in spore fusion and endocytic trafficking. This Caenorhabditis elegans protein is Ras-related protein rab-11.1.